A 435-amino-acid chain; its full sequence is tRNA modification GTPase MnmE (435 aa).

The (6S)-5-formyl-5,6,7,8-tetrahydrofolate site is built by R24, E85, and R124. Positions 220–361 (GLVFTIVGAP…LRTALAERAR (142 aa)) constitute a TrmE-type G domain. N230 serves as a coordination point for K(+). Residues 230-235 (NVGKSS), 249-255 (SAIAGTT), and 274-277 (DTAG) each bind GTP. S234 lines the Mg(2+) pocket. K(+) is bound by residues S249, I251, and T254. Position 255 (T255) interacts with Mg(2+). K435 contacts (6S)-5-formyl-5,6,7,8-tetrahydrofolate.

The protein belongs to the TRAFAC class TrmE-Era-EngA-EngB-Septin-like GTPase superfamily. TrmE GTPase family. In terms of assembly, homodimer. Heterotetramer of two MnmE and two MnmG subunits. Requires K(+) as cofactor.

The protein localises to the cytoplasm. Functionally, exhibits a very high intrinsic GTPase hydrolysis rate. Involved in the addition of a carboxymethylaminomethyl (cmnm) group at the wobble position (U34) of certain tRNAs, forming tRNA-cmnm(5)s(2)U34. This chain is tRNA modification GTPase MnmE, found in Gluconacetobacter diazotrophicus (strain ATCC 49037 / DSM 5601 / CCUG 37298 / CIP 103539 / LMG 7603 / PAl5).